A 299-amino-acid chain; its full sequence is Regucalcin (299 aa).

Glutamate 18 is an a divalent metal cation binding site. Substrate-binding residues include arginine 101, asparagine 103, and glutamate 121. Lysine 144 is modified (N6-succinyllysine). A divalent metal cation contacts are provided by asparagine 154 and aspartate 204. Residue aspartate 204 is the Proton donor/acceptor of the active site. Lysine 244 and lysine 253 each carry N6-succinyllysine. Residue serine 268 is modified to Phosphoserine.

Belongs to the SMP-30/CGR1 family. Monomer. Zn(2+) serves as cofactor. Mn(2+) is required as a cofactor. It depends on Ca(2+) as a cofactor. Requires Mg(2+) as cofactor. The cofactor is Co(2+). The N-terminus is blocked. Detected in liver (at protein level). Hepatocytes and renal proximal tubular epithelium.

It localises to the cytoplasm. It carries out the reaction D-glucono-1,5-lactone + H2O = D-gluconate + H(+). The protein operates within cofactor biosynthesis; L-ascorbate biosynthesis via UDP-alpha-D-glucuronate pathway; L-ascorbate from UDP-alpha-D-glucuronate: step 3/4. Functionally, gluconolactonase with low activity towards other sugar lactones, including gulonolactone and galactonolactone. Catalyzes a key step in ascorbic acid (vitamin C) biosynthesis. Can also hydrolyze diisopropyl phosphorofluoridate and phenylacetate (in vitro). Calcium-binding protein. Modulates Ca(2+) signaling, and Ca(2+)-dependent cellular processes and enzyme activities. The sequence is that of Regucalcin (Rgn) from Rattus norvegicus (Rat).